The primary structure comprises 210 residues: Thiamine-phosphate synthase (210 aa).

Residues 43-47 (QLREK) and Asn-75 contribute to the 4-amino-2-methyl-5-(diphosphooxymethyl)pyrimidine site. Positions 76 and 95 each coordinate Mg(2+). 4-amino-2-methyl-5-(diphosphooxymethyl)pyrimidine is bound at residue Ser-114. 140-142 (TST) lines the 2-[(2R,5Z)-2-carboxy-4-methylthiazol-5(2H)-ylidene]ethyl phosphate pocket. Residue Lys-143 participates in 4-amino-2-methyl-5-(diphosphooxymethyl)pyrimidine binding. 2-[(2R,5Z)-2-carboxy-4-methylthiazol-5(2H)-ylidene]ethyl phosphate-binding positions include Gly-170 and 190 to 191 (IS).

This sequence belongs to the thiamine-phosphate synthase family. Requires Mg(2+) as cofactor.

It catalyses the reaction 2-[(2R,5Z)-2-carboxy-4-methylthiazol-5(2H)-ylidene]ethyl phosphate + 4-amino-2-methyl-5-(diphosphooxymethyl)pyrimidine + 2 H(+) = thiamine phosphate + CO2 + diphosphate. The enzyme catalyses 2-(2-carboxy-4-methylthiazol-5-yl)ethyl phosphate + 4-amino-2-methyl-5-(diphosphooxymethyl)pyrimidine + 2 H(+) = thiamine phosphate + CO2 + diphosphate. The catalysed reaction is 4-methyl-5-(2-phosphooxyethyl)-thiazole + 4-amino-2-methyl-5-(diphosphooxymethyl)pyrimidine + H(+) = thiamine phosphate + diphosphate. Its pathway is cofactor biosynthesis; thiamine diphosphate biosynthesis; thiamine phosphate from 4-amino-2-methyl-5-diphosphomethylpyrimidine and 4-methyl-5-(2-phosphoethyl)-thiazole: step 1/1. Functionally, condenses 4-methyl-5-(beta-hydroxyethyl)thiazole monophosphate (THZ-P) and 2-methyl-4-amino-5-hydroxymethyl pyrimidine pyrophosphate (HMP-PP) to form thiamine monophosphate (TMP). This is Thiamine-phosphate synthase from Clostridioides difficile (strain 630) (Peptoclostridium difficile).